We begin with the raw amino-acid sequence, 294 residues long: Ribosomal protein L11 methyltransferase (294 aa).

4 residues coordinate S-adenosyl-L-methionine: T146, G167, D189, and N231.

Belongs to the methyltransferase superfamily. PrmA family.

It localises to the cytoplasm. It carries out the reaction L-lysyl-[protein] + 3 S-adenosyl-L-methionine = N(6),N(6),N(6)-trimethyl-L-lysyl-[protein] + 3 S-adenosyl-L-homocysteine + 3 H(+). Methylates ribosomal protein L11. This chain is Ribosomal protein L11 methyltransferase, found in Aliivibrio fischeri (strain ATCC 700601 / ES114) (Vibrio fischeri).